A 942-amino-acid chain; its full sequence is Apolipoprotein B receptor (942 aa).

5 disordered regions span residues 66 to 212 (GLRS…VTED), 240 to 269 (ERMV…QAML), 283 to 487 (DSLG…SPER), 501 to 607 (AGPE…VPWE), and 671 to 942 (EGRG…PKPQ). Basic and acidic residues-rich tracts occupy residues 106–123 (QAER…DARG), 132–143 (PEAEPGTHRDRS), 240–252 (ERMV…ERAR), 312–330 (EADK…EAEV), and 338–352 (EAER…HIAE). The segment covering 353 to 370 (EEAMGEQETEGSFEDEER) has biased composition (acidic residues). At serine 364 the chain carries Phosphoserine. Residues 384–397 (EEVRAEESSREKRN) show a composition bias toward basic and acidic residues. Residues 415 to 425 (PDWEDSPEVST) are compositionally biased toward acidic residues. Composition is skewed to basic and acidic residues over residues 444-458 (LRVK…ELVR) and 466-475 (QLEEGQKGQE). 2 positions are modified to phosphoserine: serine 484 and serine 520. Composition is skewed to basic and acidic residues over residues 514-531 (GVDR…EAGK) and 672-687 (GRGE…ETTE). Positions 709–721 (QEIDGTEEGEQAE) are enriched in acidic residues. The segment covering 837–853 (SRLDVSVPRSRVLLSRS) has biased composition (low complexity). Positions 854–863 (SSRRRSRPSF) are enriched in basic residues.

Homodimer. Post-translationally, there are 2 forms in macrophages, the membrane-binding proteins 200 kDa (MBP 200) and 235 kDa (MBP 235), that can be reduced into a single active ligand-binding species with intermediate mobility (MBP 200R). As to expression, highly expressed in spleen, lung and skeletal muscle, and weakly in brain, heart, kidney, and testis.

The protein resides in the cell membrane. In terms of biological role, macrophage receptor that binds to the apolipoprotein B48 (APOB) of dietary triglyceride (TG)-rich lipoproteins (TRL) or to a like domain of APOB in hypertriglyceridemic very low density lipoprotein (HTG-VLDL). Binds and internalizes TRL when out of the context of the macrophage. May provide essential lipids to reticuloendothelial cells. Could also be involved in foam cell formation with elevated TRL and remnant lipoprotein (RLP). Mediates the rapid high-affinity uptake of chylomicrons (CM), HTG-VLDL, and trypsinized (tryp) VLDL devoid of APOE in vitro in macrophages. In Mus musculus (Mouse), this protein is Apolipoprotein B receptor.